The sequence spans 60 residues: MAVPARRTSKTKKRMRRGHIKLNTPNVQFDATNGEYRVSHRVSPKGFYKGEQVVTPKAND.

Belongs to the bacterial ribosomal protein bL32 family.

The chain is Large ribosomal subunit protein bL32 from Latilactobacillus sakei subsp. sakei (strain 23K) (Lactobacillus sakei subsp. sakei).